The following is a 707-amino-acid chain: Eomesodermin homolog (707 aa).

A compositionally biased stretch (gly residues) spans 27-42 (GGGGGGGGGGGGGGGS). The disordered stretch occupies residues 27–125 (GGGGGGGGGG…GSPCAEEELP (99 aa)). Low complexity predominate over residues 73–93 (AGSAEPAGAGAGAPAAMLSDA). Phosphoserine is present on S117. Residues 278-458 (LWLKFHRHQT…HNPFAKGFRD (181 aa)) constitute a DNA-binding region (T-box). T473 carries the post-translational modification Phosphothreonine. The required for transcription activation stretch occupies residues 592-707 (AMAGWGGRGA…GAYYAFYTSP (116 aa)). The segment at 642 to 689 (TPPSIKSLDSSDSGVYNSACKRKRLSPSTPSNGNSPPIKCEDINTEEY) is disordered. Residues 648 to 657 (SLDSSDSGVY) are compositionally biased toward polar residues. The span at 667 to 678 (SPSTPSNGNSPP) shows a compositional bias: low complexity. Residues 680–689 (KCEDINTEEY) are compositionally biased toward basic and acidic residues.

In terms of tissue distribution, expressed in CD8+ T-cells.

The protein localises to the nucleus. Its function is as follows. Functions as a transcriptional activator playing a crucial role during development. Functions in trophoblast differentiation and later in gastrulation, regulating both mesoderm delamination and endoderm specification. Plays a role in brain development being required for the specification and the proliferation of the intermediate progenitor cells and their progeny in the cerebral cortex. Required for differentiation and migration of unipolar dendritic brush cells. Also involved in the differentiation of CD8+ T-cells during immune response regulating the expression of lytic effector genes. The sequence is that of Eomesodermin homolog (Eomes) from Mus musculus (Mouse).